A 103-amino-acid polypeptide reads, in one-letter code: Large ribosomal subunit protein bL21 (103 aa).

This sequence belongs to the bacterial ribosomal protein bL21 family. In terms of assembly, part of the 50S ribosomal subunit. Contacts protein L20.

This protein binds to 23S rRNA in the presence of protein L20. This Shewanella sediminis (strain HAW-EB3) protein is Large ribosomal subunit protein bL21.